Reading from the N-terminus, the 543-residue chain is CTP synthase (543 aa).

Residues 1–266 are amidoligase domain; sequence MTKFIFVTGG…DDIICERFGI (266 aa). Residue serine 13 participates in CTP binding. A UTP-binding site is contributed by serine 13. ATP is bound by residues 14–19 and aspartate 71; that span reads SLGKGI. The Mg(2+) site is built by aspartate 71 and glutamate 140. Residues 147–149, 187–192, and lysine 223 contribute to the CTP site; these read DIE and KTKPTQ. Residues 187–192 and lysine 223 each bind UTP; that span reads KTKPTQ. One can recognise a Glutamine amidotransferase type-1 domain in the interval 291–543; sequence TVAIVGKYVE…VKAAIDHQNI (253 aa). Glycine 354 lines the L-glutamine pocket. The active-site Nucleophile; for glutamine hydrolysis is the cysteine 381. L-glutamine-binding positions include 382-385, glutamate 404, and arginine 471; that span reads LGMQ. Active-site residues include histidine 516 and glutamate 518.

Belongs to the CTP synthase family. Homotetramer.

It catalyses the reaction UTP + L-glutamine + ATP + H2O = CTP + L-glutamate + ADP + phosphate + 2 H(+). The enzyme catalyses L-glutamine + H2O = L-glutamate + NH4(+). The catalysed reaction is UTP + NH4(+) + ATP = CTP + ADP + phosphate + 2 H(+). The protein operates within pyrimidine metabolism; CTP biosynthesis via de novo pathway; CTP from UDP: step 2/2. Allosterically activated by GTP, when glutamine is the substrate; GTP has no effect on the reaction when ammonia is the substrate. The allosteric effector GTP functions by stabilizing the protein conformation that binds the tetrahedral intermediate(s) formed during glutamine hydrolysis. Inhibited by the product CTP, via allosteric rather than competitive inhibition. In terms of biological role, catalyzes the ATP-dependent amination of UTP to CTP with either L-glutamine or ammonia as the source of nitrogen. Regulates intracellular CTP levels through interactions with the four ribonucleotide triphosphates. The chain is CTP synthase from Psychrobacter sp. (strain PRwf-1).